The following is a 169-amino-acid chain: Small ribosomal subunit protein uS5c (169 aa).

An S5 DRBM domain is found at 17–80; sequence WQERVVQIRR…ADGKKHVVEV (64 aa).

This sequence belongs to the universal ribosomal protein uS5 family. As to quaternary structure, part of the 30S ribosomal subunit. Contacts protein S4.

It localises to the plastid. The protein localises to the cyanelle. In terms of biological role, with S4 and S12 plays an important role in translational accuracy. The chain is Small ribosomal subunit protein uS5c (rps5) from Cyanophora paradoxa.